A 1050-amino-acid chain; its full sequence is Elongation factor 3 (1050 aa).

Residues Val43 and His45 each coordinate ADP. The HEAT 1 repeat unit spans residues 46–83; that stretch reads DVPVEFFEDLKKQIQSKDAKVSLAALDAYKHIASTNGL. An ADP-binding site is contributed by Ser86. 6 HEAT repeats span residues 89–126, 127–165, 169–206, 208–244, 245–282, and 288–326; these read PYVV…AITP, TAVK…TAKA, LRMP…TIDN, DIEK…EVTM, ATLS…LVED, and PFMD…VGAV. Residues Thr395, His399, and Glu400 each coordinate ADP. 2 ABC transporter domains span residues 429 to 646 and 672 to 998; these read DEGE…YYEL and VKVS…KKDD. ADP is bound by residues Asn708, Glu927, Asn930, and His956. A disordered region spans residues 980–1050; the sequence is GHNWVQGQGS…DAYVSSDEEF (71 aa). The segment covering 1013–1037 has biased composition (basic residues); sequence AAKKKKKLSSAELRKKKKERMKKKK.

It belongs to the ABC transporter superfamily. ABCF family. EF3 subfamily. As to quaternary structure, monomer.

It is found in the cytoplasm. The catalysed reaction is ATP + H2O = ADP + phosphate + H(+). Its pathway is protein biosynthesis; polypeptide chain elongation. In terms of biological role, ribosome-dependent ATPase that functions in cytoplasmic translation elongation. Required for the ATP-dependent release of deacylated tRNA from the ribosomal E-site during protein biosynthesis. Stimulates the eEF1A-dependent binding of aminoacyl-tRNA to the ribosomal A-site, which has reduced affinity for tRNA as long as the E-site is occupied. Assists translation termination by stimulating the release of nascent protein from the ribosome by release factors. This chain is Elongation factor 3 (CEF3), found in Candida albicans (strain SC5314 / ATCC MYA-2876) (Yeast).